The primary structure comprises 199 residues: Pre T-cell antigen receptor alpha (199 aa).

An N-terminal signal peptide occupies residues 1 to 16; the sequence is MARTWLLLLLGVRCQA. Residues 17 to 146 lie on the Extracellular side of the membrane; that stretch reads LPSGIAGTPF…PEPLGGTQRQ (130 aa). Cys-47 and Cys-107 form a disulfide bridge. N-linked (GlcNAc...) asparagine glycans are attached at residues Asn-67 and Asn-117. The chain crosses the membrane as a helical span at residues 147–167; the sequence is VLWLSLLRLLLFKLLLLDVLL. Residues 168-199 lie on the Cytoplasmic side of the membrane; that stretch reads TCSHLRLHVLAGQHLQPPPSRKSLPPTHRIWT.

As to quaternary structure, heterodimer with TCRB; disulfide linked. This heterodimer assembles with CD3 proteins into a signaling-competent pre-T-cell receptor complex. Interacts with RHBDD1. Isoform 1 is expressed at higher levels than isoform 2 in the thymus while only isoform 2 is expressed in polyclonal beta-only cells. Isoform 1 shows a predominant expression in immature thymocytes.

The protein localises to the membrane. It is found in the cell membrane. Its function is as follows. Component of the pre-T-cell receptor complex (composed of PTCRA, TCRB and the CD3 complex) that plays a crucial role in early T-cell development, particularly alpha-beta T cell differentiation. Isoform 1 acts to retain most TCRB intracellularly, while isoform 2 permits higher levels of cell surface TCRB expression and facilitates signaling from the CD3-TCRB complex. This Mus musculus (Mouse) protein is Pre T-cell antigen receptor alpha.